A 161-amino-acid polypeptide reads, in one-letter code: Monooxygenase AgnL5 (161 aa).

It belongs to the avfA family.

Its pathway is secondary metabolite biosynthesis. Its function is as follows. Monooxygenase; part of the gene cluster that mediates the biosynthesis of agnestins, dihydroxy-xanthone metabolites. The pathway begins with the assembly and cyclization of atrochrysone thioester by the non-reducing polyketide synthase Agnpks1. The atrochrysone carboxyl ACP thioesterase AgnL7 then breaks the thioester bond and releases the atrochrysone carboxylic acid as the first enzyme-free intermediate. The decarboxylase AgnL1 then catalyzes the concerted decarboxylation-elimination required to convert atochrysone carboxylic acid into emodin anthrone, which is further oxidized to emodin by the anthrone oxygenase AgnL2. Emodin then undergoes reduction catalyzed by the oxidoreductase AgnL4 to yield the dihydroquinone tautomer which is the substrate for reduction by the short chain dehydrogenase AgnL6 reduction to produce hydroxyketone, followed by AgnL8 dehydration and likely spontaneous autoxidation to chrysophanol. Baeyer-Villiger oxidation by the oxidase AgnL3 leads to monodictyphenone via cleavage of the C-10/C-10a bond of chrysophanol. Alternative cleavage at the C-4a/C-10 bond of chrysophanol also leads to the formation some cephalone F. Further conversion to agnestins A and B, requires reduction to dihydro-monodictyphenone, oxidation to agnestin C probably via an epoxide, and rearrangement to either agnestin A or agnestin B directly, although agnestin A or agnestin B can also interconvert. Within the cluster, AgnR1 is the only unassigned oxidoreductase present which could be involved in this conversion. However, AgnR1 seems not to be involved in this step, and thus genes involved in the proposed oxidation/reduction may be located elsewhere on the genome. Further agnestin A derivatives are probably formed by spontaneous decarboxylations, dehydrations and methanolysis reactions. In Paecilomyces divaricatus (Penicillium divaricatum), this protein is Monooxygenase AgnL5.